The following is a 488-amino-acid chain: Glycogen synthase (488 aa).

Lys17 is an ADP-alpha-D-glucose binding site.

It belongs to the glycosyltransferase 1 family. Bacterial/plant glycogen synthase subfamily.

It catalyses the reaction [(1-&gt;4)-alpha-D-glucosyl](n) + ADP-alpha-D-glucose = [(1-&gt;4)-alpha-D-glucosyl](n+1) + ADP + H(+). It functions in the pathway glycan biosynthesis; glycogen biosynthesis. Its function is as follows. Synthesizes alpha-1,4-glucan chains using ADP-glucose. This chain is Glycogen synthase, found in Nitratidesulfovibrio vulgaris (strain DSM 19637 / Miyazaki F) (Desulfovibrio vulgaris).